We begin with the raw amino-acid sequence, 250 residues long: DSC E3 ubiquitin ligase complex subunit 3 (250 aa).

A disordered region spans residues Leu105–Thr130. The span at Ser107–Thr130 shows a compositional bias: polar residues. N-linked (GlcNAc...) asparagine glycosylation is present at Asn187. Helical transmembrane passes span Thr199–Trp219 and Met228–Tyr248.

It belongs to the dsc3 family. As to quaternary structure, component of the DSC E3 ubiquitin ligase complex composed of dsc1, dsc2, dsc3 and dsc4.

The protein resides in the endoplasmic reticulum membrane. Its subcellular location is the golgi apparatus membrane. It participates in protein modification; protein ubiquitination. Its function is as follows. Component of the DSC E3 ubiquitin ligase complex which is required for the sre1 transcriptional activator proteolytic cleavage to release the soluble transcription factor from the membrane in low oxygen or sterol conditions. The complex also plays an important role in the multivesicular body (MVB) pathway and functions in a post-endoplasmic reticulum pathway for protein degradation. In Schizosaccharomyces pombe (strain 972 / ATCC 24843) (Fission yeast), this protein is DSC E3 ubiquitin ligase complex subunit 3 (dsc3).